The following is a 517-amino-acid chain: MRKINFFDTTLRDGEQSPGVNLNAQEKLIIAKQLERLGVNIIEAGFPASSRGDFLGVQEIARTIKNCSVAGLARCVKGDIDAAWEALKDGVEPRLHVFIATSDIHLKHKLKKTREEVVEQAVAMVKYAKERFPVVQWSAEDACRTDLDFLAEIVEKVIDAGASVINLPDTVGYLAPKEYGNIFKYMKEHVPNIDRVNLSAHCHDDLGMAVANSLAAIENGADQIETAVNGIGERAGNAALEEIAVALHIRKDFYQVESTIQLNEIKRTSDVVSKYSGMIVPRNKAVVGNNAFAHESGIHQDGFLKEKTTYEIISPELVGVTTDVLVLGKHSGRHAFKDRMKTLGFKLTEEEINKFFETFKNLTEKKKEITDDDLISIILEEKVADRKIGYEFESLQVHYGTEQMPTATVSLKNQETQEVIQEAATGAGSVEAVYNTLERCMEERIHLLDYRIQSNGKGRDALAEVYVTVSIEGKETAGRGVAQDVLEASAKAYVNAVNRHLIFKSNLIEIEKHHAIS.

The Pyruvate carboxyltransferase domain occupies 4 to 266; it reads INFFDTTLRD…ESTIQLNEIK (263 aa). Mn(2+) contacts are provided by Asp13, His201, His203, and Asn237. The interval 391–517 is regulatory domain; it reads EFESLQVHYG…IEIEKHHAIS (127 aa).

This sequence belongs to the alpha-IPM synthase/homocitrate synthase family. LeuA type 1 subfamily. In terms of assembly, homodimer. Requires Mn(2+) as cofactor.

It is found in the cytoplasm. The enzyme catalyses 3-methyl-2-oxobutanoate + acetyl-CoA + H2O = (2S)-2-isopropylmalate + CoA + H(+). The protein operates within amino-acid biosynthesis; L-leucine biosynthesis; L-leucine from 3-methyl-2-oxobutanoate: step 1/4. Its function is as follows. Catalyzes the condensation of the acetyl group of acetyl-CoA with 3-methyl-2-oxobutanoate (2-ketoisovalerate) to form 3-carboxy-3-hydroxy-4-methylpentanoate (2-isopropylmalate). The polypeptide is 2-isopropylmalate synthase (Bacillus pumilus (strain SAFR-032)).